We begin with the raw amino-acid sequence, 378 residues long: Protein SLG1 (378 aa).

The N-terminal stretch at 1-21 (MRPNKTSLLLALLSILSQANA) is a signal peptide. One can recognise a WSC domain in the interval 22–110 (YEYVNCFSSL…EDAYSVYQLD (89 aa)). Over 22-264 (YEYVNCFSSL…THKKKANVGA (243 aa)) the chain is Extracellular. N-linked (GlcNAc...) asparagine glycosylation is present at Asn-65. 2 disordered regions span residues 115–201 (SNSI…TSST) and 236–256 (QNSG…SKTH). A compositionally biased stretch (low complexity) spans 236–253 (QNSGSATGTAGSDSTSGS). The chain crosses the membrane as a helical span at residues 265–285 (IVGGVVGGVVGAVAIALCILL). The Cytoplasmic portion of the chain corresponds to 286–378 (IVRHINMKRE…LTVVNPDEAD (93 aa)). The tract at residues 318–378 (ASSFSSNHGP…LTVVNPDEAD (61 aa)) is disordered. A compositionally biased stretch (low complexity) spans 319–331 (SSFSSNHGPSSGS). Ser-331 and Ser-353 each carry phosphoserine.

Post-translationally, glycosylated. Phosphorylated. Phosphorylation serves a negative regulatory role.

It localises to the cell membrane. Its function is as follows. Plays a role during G1 to regulate entering or exiting the cell cycle. Involved in stress responses. Has a role in cell wall integrity signaling. Activates ROM1 or ROM2 catalyzed guanine nucleotide exchange toward RHO1. Important regulator of the actin cytoskeleton rearrangements in conditions of cell wall expansion and membrane stretching. Specifically required for the actin reorganization induced by hypo-osmotic shock. Multicopy suppressor of 1,3-beta-glucan synthase (GS). Activates GS upstream of RHO1. Acts positively on the PKC1-MAPK pathway. Activates transiently SLT2 during alkaline stress, which leads to an increase in the expression of several specific genes. The polypeptide is Protein SLG1 (SLG1) (Saccharomyces cerevisiae (strain ATCC 204508 / S288c) (Baker's yeast)).